The sequence spans 122 residues: Large ribosomal subunit protein uL14 (122 aa).

Belongs to the universal ribosomal protein uL14 family. As to quaternary structure, part of the 50S ribosomal subunit. Forms a cluster with proteins L3 and L19. In the 70S ribosome, L14 and L19 interact and together make contacts with the 16S rRNA in bridges B5 and B8.

Functionally, binds to 23S rRNA. Forms part of two intersubunit bridges in the 70S ribosome. This Microcystis aeruginosa (strain NIES-843 / IAM M-2473) protein is Large ribosomal subunit protein uL14.